Here is a 360-residue protein sequence, read N- to C-terminus: Peptide chain release factor 1 (360 aa).

Gln-237 carries the N5-methylglutamine modification.

The protein belongs to the prokaryotic/mitochondrial release factor family. Methylated by PrmC. Methylation increases the termination efficiency of RF1.

It localises to the cytoplasm. Its function is as follows. Peptide chain release factor 1 directs the termination of translation in response to the peptide chain termination codons UAG and UAA. The protein is Peptide chain release factor 1 of Azotobacter vinelandii (strain DJ / ATCC BAA-1303).